The chain runs to 118 residues: Basic phospholipase A2 PA-13 (118 aa).

7 cysteine pairs are disulfide-bonded: Cys11–Cys71, Cys27–Cys117, Cys29–Cys45, Cys44–Cys98, Cys51–Cys91, Cys60–Cys84, and Cys78–Cys89. Ca(2+) is bound by residues Tyr28, Gly30, and Gly32. The active site involves His48. A Ca(2+)-binding site is contributed by Asp49. Asp92 is an active-site residue.

Belongs to the phospholipase A2 family. Group I subfamily. D49 sub-subfamily. Requires Ca(2+) as cofactor. As to expression, expressed by the venom gland.

The protein resides in the secreted. It catalyses the reaction a 1,2-diacyl-sn-glycero-3-phosphocholine + H2O = a 1-acyl-sn-glycero-3-phosphocholine + a fatty acid + H(+). Functionally, PLA2 catalyzes the calcium-dependent hydrolysis of the 2-acyl groups in 3-sn-phosphoglycerides. The sequence is that of Basic phospholipase A2 PA-13 from Pseudechis australis (Mulga snake).